A 104-amino-acid chain; its full sequence is Zinc finger C2H2 protein ECU02_0310 (104 aa).

The C2H2-type zinc finger occupies 56–80 (FYCCECDRHFITEKVLMEHKRSNPH).

This sequence belongs to the ZNF593/BUD20 C2H2-type zinc-finger protein family. In terms of assembly, associates with pre-60S ribosomal particles; released from the pre-60S particle very early in the cytoplasm.

It localises to the nucleus. It is found in the cytoplasm. Involved in pre-60S ribosomal particles maturation by promoting the nuclear export of the 60S ribosome. The sequence is that of Zinc finger C2H2 protein ECU02_0310 from Encephalitozoon cuniculi (strain GB-M1) (Microsporidian parasite).